Here is a 500-residue protein sequence, read N- to C-terminus: MTLVDVRTPDPKRFIPGATGDWEVIVGMEVHAQVLSNSKLFSGASTEFGKPQNSNVSLVDAAMPGMLPVINEECVKQAVRTGLGLKAQINKRSLFDRKNYFYPDLPQGYQISQFKDPIVGEGKIVISLGPDRQGQFEDIEIGIERLHLEQDAGKSMHDQHATMSYVDLNRSGVALMEIVSKPDMRSSDEAKAYMTKLRSIVRYLGTCDGNMDEGSMRADVNVSVRRPGEAFGTRCEIKNVNSIRFIGQAIEYEARRQIGILEDGGTIEQETRLFDPNKGETRSMRSKEDAHDYRYFPDPDLLPLEFDDAFVTALAADLPELPDDKKERFVRELGLSVYDASVLVSEKAIADYFEAVAAGRDGKTAANWVINDLLGALNRTGKDIEQTPVSPAQLGAIIDLIKAGTISGKIAKDLFEIVLTEGGDPAEIVESRGMKQVTDTGAIEKAVDEIIAANPDQVEKVKAKPTMAAWFVGQVMKATGGKANPQAVQALVKAKLGIEE.

Belongs to the GatB/GatE family. GatB subfamily. Heterotrimer of A, B and C subunits.

It carries out the reaction L-glutamyl-tRNA(Gln) + L-glutamine + ATP + H2O = L-glutaminyl-tRNA(Gln) + L-glutamate + ADP + phosphate + H(+). It catalyses the reaction L-aspartyl-tRNA(Asn) + L-glutamine + ATP + H2O = L-asparaginyl-tRNA(Asn) + L-glutamate + ADP + phosphate + 2 H(+). In terms of biological role, allows the formation of correctly charged Asn-tRNA(Asn) or Gln-tRNA(Gln) through the transamidation of misacylated Asp-tRNA(Asn) or Glu-tRNA(Gln) in organisms which lack either or both of asparaginyl-tRNA or glutaminyl-tRNA synthetases. The reaction takes place in the presence of glutamine and ATP through an activated phospho-Asp-tRNA(Asn) or phospho-Glu-tRNA(Gln). This chain is Aspartyl/glutamyl-tRNA(Asn/Gln) amidotransferase subunit B, found in Rhizobium etli (strain CIAT 652).